Reading from the N-terminus, the 138-residue chain is Cysteine desulfuration protein SufE (138 aa).

Residue Cys51 is the Cysteine persulfide intermediate of the active site.

It belongs to the SufE family. As to quaternary structure, homodimer. Interacts with SufS.

It is found in the cytoplasm. It participates in cofactor biosynthesis; iron-sulfur cluster biosynthesis. In terms of biological role, participates in cysteine desulfuration mediated by SufS. Cysteine desulfuration mobilizes sulfur from L-cysteine to yield L-alanine and constitutes an essential step in sulfur metabolism for biosynthesis of a variety of sulfur-containing biomolecules. Functions as a sulfur acceptor for SufS, by mediating the direct transfer of the sulfur atom from the S-sulfanylcysteine of SufS, an intermediate product of cysteine desulfuration process. The polypeptide is Cysteine desulfuration protein SufE (Escherichia coli O157:H7).